The sequence spans 258 residues: C1q-related factor (258 aa).

The first 16 residues, 1–16, serve as a signal peptide directing secretion; it reads MLLVLVVLIPVLVSSG. Residues 39–117 are disordered; sequence GPGAGARTDG…PGLPGAGGSG (79 aa). Residues 67–77 show a composition bias toward low complexity; sequence GPQGKPGRTGK. The 49-residue stretch at 67–115 folds into the Collagen-like domain; that stretch reads GPQGKPGRTGKPGPPGPPGDPGPPGPVGPPGEKGEPGKPGPPGLPGAGG. Over residues 78–95 the composition is skewed to pro residues; the sequence is PGPPGPPGDPGPPGPVGP. Residues 125–258 enclose the C1q domain; sequence TTVPRVAFYA…TFSGFIIYSD (134 aa).

Interacts with ADGRB3. Forms heterooligomers with C1QL4, when proteins are coexpressed; this interaction does not occur after secretion. In terms of tissue distribution, expressed in brainstem.

It is found in the secreted. May regulate the number of excitatory synapses that are formed on hippocampus neurons. Has no effect on inhibitory synapses. The sequence is that of C1q-related factor (C1QL1) from Homo sapiens (Human).